Consider the following 559-residue polypeptide: Formate--tetrahydrofolate ligase (559 aa).

68–75 (TPAGEGKS) provides a ligand contact to ATP.

Belongs to the formate--tetrahydrofolate ligase family.

It carries out the reaction (6S)-5,6,7,8-tetrahydrofolate + formate + ATP = (6R)-10-formyltetrahydrofolate + ADP + phosphate. It functions in the pathway one-carbon metabolism; tetrahydrofolate interconversion. In Bacillus licheniformis (strain ATCC 14580 / DSM 13 / JCM 2505 / CCUG 7422 / NBRC 12200 / NCIMB 9375 / NCTC 10341 / NRRL NRS-1264 / Gibson 46), this protein is Formate--tetrahydrofolate ligase.